The primary structure comprises 445 residues: MAERNEQILTPSQLNALARDLLEGSFPLVWVEAELSSVTRPSSGHLYFTLKDARAQIRCAMFKPKSTWLKFQPREGLRVLARGRLTLYEARGDYQLVLDHMEEAGEGALRRAFDALRARLAAEGLFDAERKQSLPAHVQRLAVITSPSGAAVRDVLSVLARRFPLLEVDLLPSLVQGDSAAAQITSLLQRADASGRYDVILITRGGGSLEDLWAFNDERLARAIAAAQTPVVSAVGHETDFSLSDFVADVRAPTPSVAAELLVPDQRELVARVRRAQARMTQLQQHALGNAMQRADRLALRLRAHSPQARLQLLHRRQEEAGRQLGARMTQVLERLQARVQRGHAQVQSHNPQRHLAGLQQRLRALHPQAAMQRRLQHDQLQLRSIARSLEAVNPLATVARGYAIVTRPADGSVVRSAAEVAAGERLRAQLADGSIEVRVEPGER.

Belongs to the XseA family. Heterooligomer composed of large and small subunits.

The protein resides in the cytoplasm. It carries out the reaction Exonucleolytic cleavage in either 5'- to 3'- or 3'- to 5'-direction to yield nucleoside 5'-phosphates.. In terms of biological role, bidirectionally degrades single-stranded DNA into large acid-insoluble oligonucleotides, which are then degraded further into small acid-soluble oligonucleotides. The protein is Exodeoxyribonuclease 7 large subunit of Xanthomonas oryzae pv. oryzae (strain KACC10331 / KXO85).